The primary structure comprises 149 residues: Large ribosomal subunit protein bL9 (149 aa).

The protein belongs to the bacterial ribosomal protein bL9 family.

Functionally, binds to the 23S rRNA. The protein is Large ribosomal subunit protein bL9 of Thermotoga petrophila (strain ATCC BAA-488 / DSM 13995 / JCM 10881 / RKU-1).